The primary structure comprises 510 residues: Probable DNA ligase (510 aa).

Glutamate 210 lines the ATP pocket. The active-site N6-AMP-lysine intermediate is lysine 212. ATP is bound by residues arginine 217, arginine 232, glutamate 261, phenylalanine 296, arginine 367, and lysine 373.

The protein belongs to the ATP-dependent DNA ligase family. Mg(2+) serves as cofactor.

It catalyses the reaction ATP + (deoxyribonucleotide)n-3'-hydroxyl + 5'-phospho-(deoxyribonucleotide)m = (deoxyribonucleotide)n+m + AMP + diphosphate.. Its function is as follows. DNA ligase that seals nicks in double-stranded DNA during DNA replication, DNA recombination and DNA repair. The chain is Probable DNA ligase from Saccharopolyspora erythraea (strain ATCC 11635 / DSM 40517 / JCM 4748 / NBRC 13426 / NCIMB 8594 / NRRL 2338).